A 1928-amino-acid chain; its full sequence is Myosin-1 (1928 aa).

A Myosin N-terminal SH3-like domain is found at 8-71; sequence SSNMIVWIPD…RISDVFPVNP (64 aa). The 717-residue stretch at 75 to 791 folds into the Myosin motor domain; that stretch reads DKVENMSELT…VLADLEKQKD (717 aa). ATP is bound at residue 180 to 187; that stretch reads GESGAGKT. Residues 460–529 form an actin-binding region; it reads IGLLDIAGFE…LQLTIDLIES (70 aa). Over residues 629–641 the composition is skewed to polar residues; that stretch reads SSSAGVEANISNQ. The disordered stretch occupies residues 629–657; it reads SSSAGVEANISNQEVKKSARTSTFKTTSS. In terms of domain architecture, IQ spans 794 to 823; sequence LNNIMIKLTATIRGYTVRKEITYHLQKLKK. Positions 856-1911 form a coiled coil; that stretch reads SSNDMTRTKK…FWKSRYESTM (1056 aa).

It belongs to the TRAFAC class myosin-kinesin ATPase superfamily. Myosin family.

Required for cell division. The sequence is that of Myosin-1 (MYO1) from Saccharomyces cerevisiae (strain ATCC 204508 / S288c) (Baker's yeast).